Here is a 258-residue protein sequence, read N- to C-terminus: Proteasome subunit beta type-1 (258 aa).

Belongs to the peptidase T1B family. The 26S proteasome consists of a 20S proteasome core and two 19S regulatory subunits. The 20S proteasome core is composed of 28 subunits that are arranged in four stacked rings, resulting in a barrel-shaped structure. The two end rings are each formed by seven alpha subunits, and the two central rings are each formed by seven beta subunits. The catalytic chamber with the active sites is on the inside of the barrel.

The protein resides in the cytoplasm. It localises to the nucleus. Functionally, non-catalytic component of the proteasome, a multicatalytic proteinase complex which is characterized by its ability to cleave peptides with Arg, Phe, Tyr, Leu, and Glu adjacent to the leaving group at neutral or slightly basic pH. The proteasome has an ATP-dependent proteolytic activity. The polypeptide is Proteasome subunit beta type-1 (pbs-6) (Caenorhabditis elegans).